We begin with the raw amino-acid sequence, 957 residues long: Valine--tRNA ligase (957 aa).

The 'HIGH' region signature appears at 47–57 (PNITGQLHLGH). Residues 558 to 562 (KMSKS) carry the 'KMSKS' region motif. Lys561 is a binding site for ATP. Residues 889–918 (FNKENEINRLKKESELINRKIETIQKLLDD) are a coiled coil.

The protein belongs to the class-I aminoacyl-tRNA synthetase family. ValS type 1 subfamily. In terms of assembly, monomer.

It localises to the cytoplasm. It carries out the reaction tRNA(Val) + L-valine + ATP = L-valyl-tRNA(Val) + AMP + diphosphate. In terms of biological role, catalyzes the attachment of valine to tRNA(Val). As ValRS can inadvertently accommodate and process structurally similar amino acids such as threonine, to avoid such errors, it has a 'posttransfer' editing activity that hydrolyzes mischarged Thr-tRNA(Val) in a tRNA-dependent manner. This Blochmanniella pennsylvanica (strain BPEN) protein is Valine--tRNA ligase.